The following is a 1373-amino-acid chain: DNA-directed RNA polymerase subunit beta (1373 aa).

Belongs to the RNA polymerase beta chain family. In terms of assembly, the RNAP catalytic core consists of 2 alpha, 1 beta, 1 beta' and 1 omega subunit. When a sigma factor is associated with the core the holoenzyme is formed, which can initiate transcription.

It catalyses the reaction RNA(n) + a ribonucleoside 5'-triphosphate = RNA(n+1) + diphosphate. In terms of biological role, DNA-dependent RNA polymerase catalyzes the transcription of DNA into RNA using the four ribonucleoside triphosphates as substrates. This chain is DNA-directed RNA polymerase subunit beta, found in Rickettsia massiliae.